A 319-amino-acid chain; its full sequence is Small ribosomal subunit protein RACK1 (319 aa).

An N-acetylalanine modification is found at A2. WD repeat units follow at residues 15–55 (GHNG…QKFG), 63–102 (GHSH…TYQR), 105–145 (GHKS…ATLL), 147–191 (HNDW…IEAD), 194–233 (GHNS…AMYT), 235–275 (SAQD…DDLR), and 284–319 (AAEP…MTAN). Residues K46 and K53 each participate in a glycyl lysine isopeptide (Lys-Gly) (interchain with G-Cter in ubiquitin) cross-link. T96 is subject to Phosphothreonine. Residues K107, K137, and K161 each participate in a glycyl lysine isopeptide (Lys-Gly) (interchain with G-Cter in ubiquitin) cross-link. Position 168 is a phosphothreonine (T168).

This sequence belongs to the WD repeat G protein beta family. Ribosomal protein RACK1 subfamily. As to quaternary structure, component of the small ribosomal subunit (SSU). Mature yeast ribosomes consist of a small (40S) and a large (60S) subunit. The 40S small subunit contains 1 molecule of ribosomal RNA (18S rRNA) and 33 different proteins (encoded by 57 genes). The large 60S subunit contains 3 rRNA molecules (25S, 5.8S and 5S rRNA) and 46 different proteins (encoded by 81 genes). RACK1 is located at the head of the SSU in the vicinity of the mRNA exit channel. RACK1 interacts with the mRNA-binding protein SCP16. RACK1 also exists simultaneously as a homodimer in a cytosolic non-ribosome-bound form.

Its subcellular location is the cytoplasm. In terms of biological role, component of the ribosome, a large ribonucleoprotein complex responsible for the synthesis of proteins in the cell. The small ribosomal subunit (SSU) binds messenger RNAs (mRNAs) and translates the encoded message by selecting cognate aminoacyl-transfer RNA (tRNA) molecules. The large subunit (LSU) contains the ribosomal catalytic site termed the peptidyl transferase center (PTC), which catalyzes the formation of peptide bonds, thereby polymerizing the amino acids delivered by tRNAs into a polypeptide chain. The nascent polypeptides leave the ribosome through a tunnel in the LSU and interact with protein factors that function in enzymatic processing, targeting, and the membrane insertion of nascent chains at the exit of the ribosomal tunnel. Located at the head of the 40S ribosomal subunit in the vicinity of the mRNA exit channel, RACK1 serves as a scaffold protein that can recruit other proteins to the ribosome. Involved in induction of the ribosome quality control (RQC) pathway; a pathway that degrades nascent peptide chains during problematic translation. Involved in the negative regulation of translation of a specific subset of proteins. The protein is Small ribosomal subunit protein RACK1 of Saccharomyces cerevisiae (strain ATCC 204508 / S288c) (Baker's yeast).